Reading from the N-terminus, the 208-residue chain is Small ribosomal subunit protein uS5 (208 aa).

A compositionally biased stretch (polar residues) spans 1–19; the sequence is MTDSNNQSPNKKTSGSSGA. The tract at residues 1-54 is disordered; it reads MTDSNNQSPNKKTSGSSGAPTAADGRQENRRSRGEKRGGRRDRRGQERDSEWQE. Basic and acidic residues-rich tracts occupy residues 25-37 and 44-54; these read GRQENRRSRGEKR and RGQERDSEWQE. The 64-residue stretch at 52 to 115 folds into the S5 DRBM domain; it reads WQERVVQIRR…ADGKKHLVRV (64 aa).

The protein belongs to the universal ribosomal protein uS5 family. As to quaternary structure, part of the 30S ribosomal subunit. Contacts proteins S4 and S8.

Functionally, with S4 and S12 plays an important role in translational accuracy. Located at the back of the 30S subunit body where it stabilizes the conformation of the head with respect to the body. In Prochlorococcus marinus (strain NATL1A), this protein is Small ribosomal subunit protein uS5.